A 61-amino-acid polypeptide reads, in one-letter code: MAVPKRKTSPSKRGMRRSADALKAPTYVEDKDSGELRRPHHIDLKTGMYRGRSVLTPKNSG.

Residues 1 to 16 show a composition bias toward basic residues; that stretch reads MAVPKRKTSPSKRGMR. Residues 1 to 61 are disordered; sequence MAVPKRKTSP…RSVLTPKNSG (61 aa). Residues 28–44 show a composition bias toward basic and acidic residues; it reads VEDKDSGELRRPHHIDL.

Belongs to the bacterial ribosomal protein bL32 family.

The chain is Large ribosomal subunit protein bL32 from Bartonella bacilliformis (strain ATCC 35685 / KC583 / Herrer 020/F12,63).